We begin with the raw amino-acid sequence, 188 residues long: Urease accessory protein UreE (188 aa).

The tract at residues 142 to 174 is disordered; it reads AYQSQAGAGHHHHHDHDHGHSHDHSHTHSHADS. Residues 157 to 172 show a composition bias toward basic and acidic residues; it reads HDHGHSHDHSHTHSHA.

Belongs to the UreE family.

It localises to the cytoplasm. Functionally, involved in urease metallocenter assembly. Binds nickel. Probably functions as a nickel donor during metallocenter assembly. This is Urease accessory protein UreE from Tolumonas auensis (strain DSM 9187 / NBRC 110442 / TA 4).